A 376-amino-acid chain; its full sequence is Glucose-1-phosphate adenylyltransferase (376 aa).

Alpha-D-glucose 1-phosphate-binding positions include Tyr101, Gly166, 181–182, and Ser192; that span reads EK.

The protein belongs to the bacterial/plant glucose-1-phosphate adenylyltransferase family. As to quaternary structure, homotetramer.

The catalysed reaction is alpha-D-glucose 1-phosphate + ATP + H(+) = ADP-alpha-D-glucose + diphosphate. The protein operates within glycan biosynthesis; glycogen biosynthesis. Involved in the biosynthesis of ADP-glucose, a building block required for the elongation reactions to produce glycogen. Catalyzes the reaction between ATP and alpha-D-glucose 1-phosphate (G1P) to produce pyrophosphate and ADP-Glc. This is Glucose-1-phosphate adenylyltransferase from Bacillus cereus (strain ATCC 10987 / NRS 248).